We begin with the raw amino-acid sequence, 66 residues long: MPKMKTHRGSAKRFKKTGSGKLKRSHAYTSHLFANKSQKQKRKLRKSAVVSAGDFKRIKQQLANIK.

Over residues 1 to 26 (MPKMKTHRGSAKRFKKTGSGKLKRSH) the composition is skewed to basic residues. The tract at residues 1–48 (MPKMKTHRGSAKRFKKTGSGKLKRSHAYTSHLFANKSQKQKRKLRKSA) is disordered.

The protein belongs to the bacterial ribosomal protein bL35 family.

The polypeptide is Large ribosomal subunit protein bL35 (Bacillus licheniformis (strain ATCC 14580 / DSM 13 / JCM 2505 / CCUG 7422 / NBRC 12200 / NCIMB 9375 / NCTC 10341 / NRRL NRS-1264 / Gibson 46)).